A 360-amino-acid polypeptide reads, in one-letter code: SPRY domain-containing SOCS box protein 3 (360 aa).

The interval 21 to 54 (DQDGRSPALHAEEEAWGYDSDGQHSNSDSDTDLL) is disordered. One can recognise a B30.2/SPRY domain in the interval 84-274 (SLHPFRQIKS…MKVIRSCCCR (191 aa)). The 52-residue stretch at 264-315 (SMKVIRSCCCRTSLQYLCCARLRQLLPGSVDSLEVLPLPPGLKQVLSNKLGW) folds into the SOCS box domain. Residues 322–350 (NRSSQHKGDGSATTSCGSYSDSSCTPGHD) form a disordered region. Residues 332 to 346 (SATTSCGSYSDSSCT) show a composition bias toward polar residues.

It belongs to the SPSB family. As to quaternary structure, substrate-recognition component of the ECS(SPSB3) complex, composed of spsb3, cul5, elob, elob and rnf7/rbx2.

It is found in the nucleus. Its pathway is protein modification; protein ubiquitination. Substrate-recognition component of a cullin-5-RING E3 ubiquitin-protein ligase complex (ECS complex, also named CRL5 complex), which mediates the ubiquitination and subsequent proteasomal degradation of target proteins. The polypeptide is SPRY domain-containing SOCS box protein 3 (spsb3) (Xenopus laevis (African clawed frog)).